A 148-amino-acid chain; its full sequence is Deoxyuridine 5'-triphosphate nucleotidohydrolase (148 aa).

Substrate contacts are provided by residues 68 to 70 (RSG), Asn-81, 85 to 87 (TID), and Lys-95.

It belongs to the dUTPase family. The cofactor is Mg(2+).

The enzyme catalyses dUTP + H2O = dUMP + diphosphate + H(+). It functions in the pathway pyrimidine metabolism; dUMP biosynthesis; dUMP from dCTP (dUTP route): step 2/2. Its function is as follows. This enzyme is involved in nucleotide metabolism: it produces dUMP, the immediate precursor of thymidine nucleotides and it decreases the intracellular concentration of dUTP so that uracil cannot be incorporated into DNA. The sequence is that of Deoxyuridine 5'-triphosphate nucleotidohydrolase from Rickettsia rickettsii (strain Iowa).